The sequence spans 1770 residues: Transposon Ty2-GR1 Gag-Pol polyprotein (1770 aa).

3 stretches are compositionally biased toward polar residues: residues 1 to 11 (MESQQLHQNPH), 19 to 39 (ASVT…SASN), and 49 to 60 (KVNSQQETTPGT). Disordered regions lie at residues 1-86 (MESQ…GQYQ) and 360-453 (HSEY…LPDH). The segment at 295–397 (ENNINVSDRL…SSKPRAAKAH (103 aa)) is RNA-binding. Residues 369 to 381 (TSPNTTNTKVTTR) are compositionally biased toward low complexity. Positions 399 to 408 (IATSSKFSRV) are enriched in polar residues. Residue aspartate 457 is the For protease activity; shared with dimeric partner of the active site. The integrase-type zinc finger-like stretch occupies residues 579–636 (NVNKSKSVNKYPYPLIHRMLGHANFRSIQKSLKKNAVTYLKESDIEWSNASTYQCPDC). Positions 656-831 (ESYEPFQYLH…AGLDITTILP (176 aa)) constitute an Integrase catalytic domain. Mg(2+) is bound by residues aspartate 667 and aspartate 732. Disordered stretches follow at residues 1004–1034 (MGGT…STNE), 1059–1135 (TEEP…KSSK), 1146–1165 (LPLP…VSKD), and 1170–1205 (HSRQ…TEIE). Composition is skewed to polar residues over residues 1009–1034 (ESDT…STNE) and 1065–1082 (QRNS…STPS). Residues 1151–1165 (LTHKSPTDTSDVSKD) are compositionally biased toward basic and acidic residues. Residues 1193-1227 (KKRSLEDNETEIEVSRDTWNNKNMRSLEPPRSKKR) carry the Bipartite nuclear localization signal motif. A Reverse transcriptase Ty1/copia-type domain is found at 1353–1491 (NDYYITQLDI…DILGLEIKYQ (139 aa)). Mg(2+) contacts are provided by aspartate 1361, aspartate 1442, aspartate 1443, aspartate 1625, glutamate 1667, and aspartate 1700. Positions 1625–1767 (DASYGNQPYY…IKTFKLLTNK (143 aa)) constitute an RNase H Ty1/copia-type domain.

As to quaternary structure, the capsid protein forms a homotrimer, from which the VLPs are assembled. The protease is a homodimer, whose active site consists of two apposed aspartic acid residues. In terms of processing, initially, virus-like particles (VLPs) are composed of the structural unprocessed proteins Gag and Gag-Pol, and also contain the host initiator methionine tRNA (tRNA(i)-Met) which serves as a primer for minus-strand DNA synthesis, and a dimer of genomic Ty RNA. Processing of the polyproteins occurs within the particle and proceeds by an ordered pathway, called maturation. First, the protease (PR) is released by autocatalytic cleavage of the Gag-Pol polyprotein, and this cleavage is a prerequisite for subsequent processing at the remaining sites to release the mature structural and catalytic proteins. Maturation takes place prior to the RT reaction and is required to produce transposition-competent VLPs.

It localises to the cytoplasm. The protein resides in the nucleus. It catalyses the reaction DNA(n) + a 2'-deoxyribonucleoside 5'-triphosphate = DNA(n+1) + diphosphate. It carries out the reaction Endonucleolytic cleavage to 5'-phosphomonoester.. Functionally, capsid protein (CA) is the structural component of the virus-like particle (VLP), forming the shell that encapsulates the retrotransposons dimeric RNA genome. The particles are assembled from trimer-clustered units and there are holes in the capsid shells that allow for the diffusion of macromolecules. CA also has nucleocapsid-like chaperone activity, promoting primer tRNA(i)-Met annealing to the multipartite primer-binding site (PBS), dimerization of Ty2 RNA and initiation of reverse transcription. Its function is as follows. The aspartyl protease (PR) mediates the proteolytic cleavages of the Gag and Gag-Pol polyproteins after assembly of the VLP. Reverse transcriptase/ribonuclease H (RT) is a multifunctional enzyme that catalyzes the conversion of the retro-elements RNA genome into dsDNA within the VLP. The enzyme displays a DNA polymerase activity that can copy either DNA or RNA templates, and a ribonuclease H (RNase H) activity that cleaves the RNA strand of RNA-DNA heteroduplexes during plus-strand synthesis and hydrolyzes RNA primers. The conversion leads to a linear dsDNA copy of the retrotransposon that includes long terminal repeats (LTRs) at both ends. In terms of biological role, integrase (IN) targets the VLP to the nucleus, where a subparticle preintegration complex (PIC) containing at least integrase and the newly synthesized dsDNA copy of the retrotransposon must transit the nuclear membrane. Once in the nucleus, integrase performs the integration of the dsDNA into the host genome. The chain is Transposon Ty2-GR1 Gag-Pol polyprotein (TY2B-GR1) from Saccharomyces cerevisiae (strain ATCC 204508 / S288c) (Baker's yeast).